A 179-amino-acid polypeptide reads, in one-letter code: Outer-membrane lipoprotein carrier protein (179 aa).

The signal sequence occupies residues 1–22; sequence MEVLRRYVLVFTSLCMTLFAWG.

Belongs to the LolA family. As to quaternary structure, monomer.

The protein localises to the periplasm. Participates in the translocation of lipoproteins from the inner membrane to the outer membrane. Only forms a complex with a lipoprotein if the residue after the N-terminal Cys is not an aspartate (The Asp acts as a targeting signal to indicate that the lipoprotein should stay in the inner membrane). The sequence is that of Outer-membrane lipoprotein carrier protein from Helicobacter hepaticus (strain ATCC 51449 / 3B1).